Reading from the N-terminus, the 136-residue chain is Peptide methionine sulfoxide reductase MsrB (136 aa).

The region spanning 7 to 129 (SSSHENTLTE…NSASLSFTDD (123 aa)) is the MsrB domain. Zn(2+) contacts are provided by cysteine 46, cysteine 49, cysteine 95, and cysteine 98. Cysteine 118 (nucleophile) is an active-site residue.

Belongs to the MsrB Met sulfoxide reductase family. Requires Zn(2+) as cofactor.

It carries out the reaction L-methionyl-[protein] + [thioredoxin]-disulfide + H2O = L-methionyl-(R)-S-oxide-[protein] + [thioredoxin]-dithiol. The chain is Peptide methionine sulfoxide reductase MsrB from Erwinia tasmaniensis (strain DSM 17950 / CFBP 7177 / CIP 109463 / NCPPB 4357 / Et1/99).